The following is an 859-amino-acid chain: Chitin synthase 1 (859 aa).

The interval 1–22 is disordered; it reads MRRWFKKTLPRPPDEEESAGLT. Helical transmembrane passes span 544–564, 615–635, 662–682, 793–813, and 833–853; these read LATI…FYIL, MVIM…WIAY, FINI…VSII, YVVL…LSIP, and LWSV…YLFI.

It belongs to the chitin synthase family.

It is found in the cell membrane. It catalyses the reaction [(1-&gt;4)-N-acetyl-beta-D-glucosaminyl](n) + UDP-N-acetyl-alpha-D-glucosamine = [(1-&gt;4)-N-acetyl-beta-D-glucosaminyl](n+1) + UDP + H(+). In terms of biological role, polymerizes chitin, a structural polymer of the cell wall and septum, by transferring the sugar moiety of UDP-GlcNAc to the non-reducing end of the growing chitin polymer. This chain is Chitin synthase 1 (chs1), found in Schizosaccharomyces pombe (strain 972 / ATCC 24843) (Fission yeast).